The chain runs to 233 residues: 27 kDa hemolymph glycoprotein (233 aa).

Positions 1-17 (MIWKTLIVAFMATAVLA) are cleaved as a signal peptide. Residues N125 and N156 are each glycosylated (N-linked (GlcNAc...) asparagine).

This sequence belongs to the UPF0408 family. Post-translationally, N-glycosylated. As to expression, hemolymph.

The protein resides in the secreted. In Manduca sexta (Tobacco hawkmoth), this protein is 27 kDa hemolymph glycoprotein.